Consider the following 588-residue polypeptide: Adenine deaminase (588 aa).

The protein belongs to the metallo-dependent hydrolases superfamily. Adenine deaminase family. Homodimer. The cofactor is Mn(2+).

It catalyses the reaction adenine + H2O + H(+) = hypoxanthine + NH4(+). This is Adenine deaminase from Shigella boydii serotype 4 (strain Sb227).